A 545-amino-acid polypeptide reads, in one-letter code: CTP synthase (545 aa).

Positions 1–266 (MTKNYIFITG…DDYICNYFKL (266 aa)) are amidoligase domain. Ser-14 contributes to the CTP binding site. A UTP-binding site is contributed by Ser-14. ATP-binding positions include 15-20 (SLGKGI) and Asp-72. Residues Asp-72 and Glu-140 each contribute to the Mg(2+) site. CTP-binding positions include 147–149 (DIE), 187–192 (KTKPTQ), and Lys-223. Residues 187-192 (KTKPTQ) and Lys-223 each bind UTP. 239–241 (KDV) is an ATP binding site. Residues 291–543 (VIGIIGKYIK…IKSAGKHKKN (253 aa)) enclose the Glutamine amidotransferase type-1 domain. Gly-352 is an L-glutamine binding site. The active-site Nucleophile; for glutamine hydrolysis is the Cys-379. Residues 380 to 383 (LGMQ), Glu-403, and Arg-471 contribute to the L-glutamine site. Residues His-516 and Glu-518 contribute to the active site.

The protein belongs to the CTP synthase family. As to quaternary structure, homotetramer.

It catalyses the reaction UTP + L-glutamine + ATP + H2O = CTP + L-glutamate + ADP + phosphate + 2 H(+). It carries out the reaction L-glutamine + H2O = L-glutamate + NH4(+). The enzyme catalyses UTP + NH4(+) + ATP = CTP + ADP + phosphate + 2 H(+). Its pathway is pyrimidine metabolism; CTP biosynthesis via de novo pathway; CTP from UDP: step 2/2. Allosterically activated by GTP, when glutamine is the substrate; GTP has no effect on the reaction when ammonia is the substrate. The allosteric effector GTP functions by stabilizing the protein conformation that binds the tetrahedral intermediate(s) formed during glutamine hydrolysis. Inhibited by the product CTP, via allosteric rather than competitive inhibition. Catalyzes the ATP-dependent amination of UTP to CTP with either L-glutamine or ammonia as the source of nitrogen. Regulates intracellular CTP levels through interactions with the four ribonucleotide triphosphates. This chain is CTP synthase, found in Buchnera aphidicola subsp. Acyrthosiphon pisum (strain 5A).